The primary structure comprises 383 residues: Hippurate hydrolase (383 aa).

This sequence belongs to the peptidase M20 family.

It carries out the reaction N-benzoylglycine + H2O = benzoate + glycine. Cleaves hippuric acid into benzoic acid and glycine. The polypeptide is Hippurate hydrolase (Campylobacter jejuni subsp. jejuni serotype O:2 (strain ATCC 700819 / NCTC 11168)).